Consider the following 263-residue polypeptide: HTH-type transcriptional repressor NanR (263 aa).

The interval 1 to 25 is disordered; the sequence is MDVMNAFDSQAEDSPTSLGRSLRRR. One can recognise an HTH gntR-type domain in the interval 30–98; the sequence is KKLSEMVEEE…NGERARVSRP (69 aa). The H-T-H motif DNA-binding region spans 58-77; it reads ERELMAFFNVGRPSVREALA.

This sequence belongs to the NanR family.

In terms of biological role, transcriptional repressor that controls expression of the genes required for the catabolism of sialic acids. The protein is HTH-type transcriptional repressor NanR of Salmonella choleraesuis (strain SC-B67).